The primary structure comprises 91 residues: Putative ribonuclease inhibitor YrdF (91 aa).

The protein belongs to the barstar family.

Its subcellular location is the cytoplasm. In Bacillus subtilis (strain 168), this protein is Putative ribonuclease inhibitor YrdF (yrdF).